The chain runs to 345 residues: Phosphate acyltransferase (345 aa).

This sequence belongs to the PlsX family. Homodimer. Probably interacts with PlsY.

The protein resides in the cytoplasm. It catalyses the reaction a fatty acyl-[ACP] + phosphate = an acyl phosphate + holo-[ACP]. Its pathway is lipid metabolism; phospholipid metabolism. In terms of biological role, catalyzes the reversible formation of acyl-phosphate (acyl-PO(4)) from acyl-[acyl-carrier-protein] (acyl-ACP). This enzyme utilizes acyl-ACP as fatty acyl donor, but not acyl-CoA. This Nitratidesulfovibrio vulgaris (strain ATCC 29579 / DSM 644 / CCUG 34227 / NCIMB 8303 / VKM B-1760 / Hildenborough) (Desulfovibrio vulgaris) protein is Phosphate acyltransferase.